We begin with the raw amino-acid sequence, 325 residues long: Phospho-N-acetylmuramoyl-pentapeptide-transferase (325 aa).

Transmembrane regions (helical) follow at residues 5-25 (VLLLTLILSFVITVILSPIFI), 57-77 (LMILLSILVSSLFVSFQLSIF), 81-101 (VLLLLLVTIGFGVLGFIDDFI), 117-137 (LIGQLVVAVLFYLGLRNMGLS), 146-166 (SLSIDFGWFYLPLVIVMLVGA), 178-198 (GLVAGTGAIAFGAFAIIAWAT), 200-220 (YFEVAIFSAAVVGAVLGFLVF), 227-247 (VFMGDTGSLALGGAIAAIAIM), 252-272 (ILLIIIGGVFVIETLSVIIQV), and 304-324 (VTFWTVGLLFAMLAIYLEVWI).

This sequence belongs to the glycosyltransferase 4 family. MraY subfamily. The cofactor is Mg(2+).

It is found in the cell membrane. The enzyme catalyses UDP-N-acetyl-alpha-D-muramoyl-L-alanyl-gamma-D-glutamyl-meso-2,6-diaminopimeloyl-D-alanyl-D-alanine + di-trans,octa-cis-undecaprenyl phosphate = di-trans,octa-cis-undecaprenyl diphospho-N-acetyl-alpha-D-muramoyl-L-alanyl-D-glutamyl-meso-2,6-diaminopimeloyl-D-alanyl-D-alanine + UMP. The protein operates within cell wall biogenesis; peptidoglycan biosynthesis. Functionally, catalyzes the initial step of the lipid cycle reactions in the biosynthesis of the cell wall peptidoglycan: transfers peptidoglycan precursor phospho-MurNAc-pentapeptide from UDP-MurNAc-pentapeptide onto the lipid carrier undecaprenyl phosphate, yielding undecaprenyl-pyrophosphoryl-MurNAc-pentapeptide, known as lipid I. In Halalkalibacterium halodurans (strain ATCC BAA-125 / DSM 18197 / FERM 7344 / JCM 9153 / C-125) (Bacillus halodurans), this protein is Phospho-N-acetylmuramoyl-pentapeptide-transferase.